The chain runs to 777 residues: Ethylene receptor 4 (777 aa).

The next 3 membrane-spanning stretches (helical) occupy residues 49-69 (LLIAASFLSIPLELFYFATCA), 77-97 (AVLHFCAFIVLCGATHLLAAF), and 113-133 (AAKVLAAVASSAAAVSLLTFI). The Cu cation site is built by Cys88 and His92. Residues 184–344 (DAHAILRTTA…VVADQAAVAL (161 aa)) enclose the GAF domain. A Histidine kinase domain is found at 387-521 (AMCHAMRRPV…NTGSGACRLS (135 aa)). At His390 the chain carries Phosphohistidine; by autocatalysis. The Response regulatory domain occupies 645–774 (RVLLADDDAM…ALGAQLCRVL (130 aa)). Asp696 carries the post-translational modification 4-aspartylphosphate.

Belongs to the ethylene receptor family. The cofactor is Cu cation.

Its subcellular location is the endoplasmic reticulum membrane. The catalysed reaction is ATP + protein L-histidine = ADP + protein N-phospho-L-histidine.. Ethylene receptor related to bacterial two-component regulators. Acts as a redundant negative regulator of ethylene signaling. The protein is Ethylene receptor 4 (ETR4) of Oryza sativa subsp. japonica (Rice).